The chain runs to 296 residues: MSNTPFRTGFVAVVGRPNVGKSTLTNALIGSKISIVSRKAQTTRHRIHGVLTREHEQFVFVDTPGFQTRHGGAMNRMMNRVVTQALAEVDVVVHVVEAGKWTDGDAKLLPLLPDARRTILVVSKIDAVKRRDELFAFVSKIVAQHPYDAVVPVSAVKSQQLDQLLDEIAARLPEGEPLFEEDTLTDRPMRFIAAELLREKIFRLVGDELPYGCTVVIEQWEETDKNLRVAACVVVERDSHRPILLGAGGVHMKRIATEARQDIAKLVDKPVHLEVYIKVRKGWSDRESALRDLGYE.

An Era-type G domain is found at 7 to 174 (RTGFVAVVGR…LDEIAARLPE (168 aa)). Positions 15–22 (GRPNVGKS) are G1. A GTP-binding site is contributed by 15-22 (GRPNVGKS). The G2 stretch occupies residues 41 to 45 (QTTRH). A G3 region spans residues 62–65 (DTPG). GTP is bound by residues 62 to 66 (DTPGF) and 123 to 126 (SKID). The segment at 123 to 126 (SKID) is G4. The interval 153 to 155 (VSA) is G5. The KH type-2 domain maps to 205 to 281 (VGDELPYGCT…HLEVYIKVRK (77 aa)).

It belongs to the TRAFAC class TrmE-Era-EngA-EngB-Septin-like GTPase superfamily. Era GTPase family. In terms of assembly, monomer.

It localises to the cytoplasm. The protein localises to the cell inner membrane. In terms of biological role, an essential GTPase that binds both GDP and GTP, with rapid nucleotide exchange. Plays a role in 16S rRNA processing and 30S ribosomal subunit biogenesis and possibly also in cell cycle regulation and energy metabolism. The chain is GTPase Era from Bordetella petrii (strain ATCC BAA-461 / DSM 12804 / CCUG 43448).